We begin with the raw amino-acid sequence, 227 residues long: MMLHIPGVLTNAQVAQCRELLDAAHWVDGNATSGAQSALAKRNRQLPEGSPVARAVGDAIQDALARHALFFSAALPLKVFPPLFNRYAGGETFGTHVDNAIRLLRGTDFRVRSDLSATLFLEEPDAYDGGELCVEDTYGVHRAKLPAGDLVLYPASSLHHVTPVTRGERVASFFWIQSMVRDDGDRTLLFQLDTQIQALSAEKGAKDPMVISLTGIYHNLLRKWADA.

Residues 78 to 178 (KVFPPLFNRY…RVASFFWIQS (101 aa)) form the Fe2OG dioxygenase domain. Fe cation-binding residues include H96, D98, and H159. R169 serves as a coordination point for 2-oxoglutarate.

The cofactor is Fe(2+). It depends on L-ascorbate as a cofactor.

The polypeptide is PKHD-type hydroxylase Bamb_4192 (Burkholderia ambifaria (strain ATCC BAA-244 / DSM 16087 / CCUG 44356 / LMG 19182 / AMMD) (Burkholderia cepacia (strain AMMD))).